A 307-amino-acid chain; its full sequence is Aspartate carbamoyltransferase catalytic subunit (307 aa).

Carbamoyl phosphate contacts are provided by arginine 56 and threonine 57. L-aspartate is bound at residue lysine 84. Positions 106, 136, and 139 each coordinate carbamoyl phosphate. 2 residues coordinate L-aspartate: arginine 169 and arginine 221. Alanine 262 and proline 263 together coordinate carbamoyl phosphate.

This sequence belongs to the aspartate/ornithine carbamoyltransferase superfamily. ATCase family. Heterododecamer (2C3:3R2) of six catalytic PyrB chains organized as two trimers (C3), and six regulatory PyrI chains organized as three dimers (R2).

The enzyme catalyses carbamoyl phosphate + L-aspartate = N-carbamoyl-L-aspartate + phosphate + H(+). Its pathway is pyrimidine metabolism; UMP biosynthesis via de novo pathway; (S)-dihydroorotate from bicarbonate: step 2/3. Functionally, catalyzes the condensation of carbamoyl phosphate and aspartate to form carbamoyl aspartate and inorganic phosphate, the committed step in the de novo pyrimidine nucleotide biosynthesis pathway. The sequence is that of Aspartate carbamoyltransferase catalytic subunit from Streptococcus pneumoniae (strain JJA).